We begin with the raw amino-acid sequence, 361 residues long: NudC domain-containing protein 3 (361 aa).

The segment covering 87–97 has biased composition (basic and acidic residues); the sequence is KIRRKEEEEAK. 2 disordered regions span residues 87–106 and 124–158; these read KIRR…AAEK and LDGH…VAGA. Residue Ser-146 is modified to Phosphoserine. A compositionally biased stretch (low complexity) spans 148–158; it reads EAEAPGAVAGA. Residues 185 to 277 form the CS domain; the sequence is AVRENYTWSQ…VGEYWWNAIL (93 aa). A phosphoserine mark is found at Ser-340 and Ser-355.

This is NudC domain-containing protein 3 (NUDCD3) from Homo sapiens (Human).